The chain runs to 534 residues: MKFTLGLGSRAWRVSWEGAAAAAAGPGAGGSALRCRAQRVSSPRLGRRGSRLSGALPLCLSRGGGGAQALPDCAGPSPGHPGHPGARQLAGPLAMEQTYGEVNQLGGVFVNGRPLPNAIRLRIVELAQLGIRPCDISRQLRVSHGCVSKILARYNETGSILPGAIGGSKPRVTTPNVVKHIRDYKQGDPGIFAWEIRDRLLADGVCDKYNVPSVSSISRILRNKIGSLAQPGPYEASKQPPSQPTLPYNHIYQYPYPSPVSPTGAKMGSHPGVPGTAGHVSIPRSWPSAHSVSNILGIRTFMEQTGALAGSEGTAYSPKMEDWAGVNRTAFPATPAVNGLEKPALEADIKYTQSASTLSAVGGFLPACAYPASNQHGVYSAPGGGYLAPGPPWPPAQGPPLAPPGAGVAVHGGELAAAMTFKHPSREGSLPAPAARPRTPSVAYTDCPSRPRPPRGSSPRTRARRERQADPGAQVCAAAPAIGTGRIGGLAEEEASAGPRGARPASPQAQPCLWPDPPHFLYWSGFLGFSELGF.

A DNA-binding region (paired) is located at residues 98 to 224 (TYGEVNQLGG…SSISRILRNK (127 aa)). A PAI subdomain region spans residues 101–157 (EVNQLGGVFVNGRPLPNAIRLRIVELAQLGIRPCDISRQLRVSHGCVSKILARYNET). The segment at 176 to 224 (NVVKHIRDYKQGDPGIFAWEIRDRLLADGVCDKYNVPSVSSISRILRNK) is RED subdomain. Disordered stretches follow at residues 424 to 480 (PSRE…AAAP) and 492 to 511 (EEEA…QAQP).

The protein resides in the nucleus. This protein is a transcriptional activator. It may play a role in the formation of segmented structures of the embryo. May play an important role in the normal development of the vertebral column. The chain is Paired box protein Pax-1 (PAX1) from Homo sapiens (Human).